The following is a 334-amino-acid chain: AT-hook motif nuclear-localized protein 2 (334 aa).

Over residues 1–21 the composition is skewed to low complexity; the sequence is METTGEVVKTTTGSDGGVTVV. Disordered stretches follow at residues 1–103 and 109–128; these read METT…PTTS and STTSEKRGKMKPATPTPSSF. Pro residues predominate over residues 44–54; that stretch reads SVAPPPPPPPQ. Positions 71 to 80 are enriched in basic residues; the sequence is IKKRRGRPRK. The Bipartite nuclear localization signal signature appears at 72 to 80; sequence KKRRGRPRK. Positions 72-84 form a DNA-binding region, a.T hook; that stretch reads KKRRGRPRKYGHD. Polar residues predominate over residues 90–103; it reads LSPNPISSAAPTTS. The 141-residue stretch at 147–287 folds into the PPC domain; the sequence is AANFTPHIIT…PHNHNFMSSP (141 aa). Over residues 306-319 the composition is skewed to polar residues; sequence SSLPISTWTPSFPS. A disordered region spans residues 306-334; that stretch reads SSLPISTWTPSFPSDSRHKHSHDFNITLT.

It localises to the nucleus. Functionally, transcription factor that specifically binds AT-rich DNA sequences related to the nuclear matrix attachment regions (MARs). This chain is AT-hook motif nuclear-localized protein 2, found in Arabidopsis thaliana (Mouse-ear cress).